The sequence spans 356 residues: tRNA N6-adenosine threonylcarbamoyltransferase (356 aa).

Positions 115 and 119 each coordinate Fe cation. Substrate is bound by residues 138 to 142 (LVSGG), aspartate 171, glycine 184, and asparagine 283. Fe cation is bound at residue aspartate 311.

The protein belongs to the KAE1 / TsaD family. Requires Fe(2+) as cofactor.

The protein resides in the cytoplasm. The catalysed reaction is L-threonylcarbamoyladenylate + adenosine(37) in tRNA = N(6)-L-threonylcarbamoyladenosine(37) in tRNA + AMP + H(+). Required for the formation of a threonylcarbamoyl group on adenosine at position 37 (t(6)A37) in tRNAs that read codons beginning with adenine. Is involved in the transfer of the threonylcarbamoyl moiety of threonylcarbamoyl-AMP (TC-AMP) to the N6 group of A37, together with TsaE and TsaB. TsaD likely plays a direct catalytic role in this reaction. The sequence is that of tRNA N6-adenosine threonylcarbamoyltransferase from Prochlorococcus marinus (strain SARG / CCMP1375 / SS120).